A 3298-amino-acid chain; its full sequence is Protocadherin-16 (3298 aa).

Positions 1–42 (MQKELGIVPSCPGMKSPRPHLLLPLLLLLLLLLGAGVPGAWG) are cleaved as a signal peptide. 27 consecutive Cadherin domains span residues 43 to 143 (QAGS…APAF), 144 to 255 (PQAR…APAF), 256 to 362 (NQSR…QPSM), 367 to 472 (LSAD…APAF), 474 to 578 (RQLY…EPQF), 579 to 685 (QRTF…PPQF), 686 to 790 (YPRE…PPIF), 791 to 894 (EQLQ…SPAF), 895 to 1000 (PAPE…APRF), 1001 to 1111 (NSPT…DPTF), 1112 to 1211 (LAVA…SPTF), 1218 to 1324 (AGGG…PPDL), 1333 to 1436 (VPVV…APAF), 1437 to 1546 (ARDP…APVF), 1547 to 1649 (ASPS…APTF), 1650 to 1751 (QQQE…APTF), 1752 to 1855 (GSAH…APAF), 1856 to 1960 (PVPA…APTF), 1965 to 2068 (LRLR…GPRF), 2069 to 2171 (PRAS…APRF), 2172 to 2277 (LRPH…RPTI), 2278 to 2376 (PQPW…APAF), 2377 to 2482 (SQSL…APSF), 2483 to 2602 (TLSH…PPVF), 2603 to 2706 (TRAS…GPAF), 2707 to 2813 (PLNL…DPVF), and 2814 to 2933 (LAPA…APDL). Residues 43–2940 (QAGSLDLQID…PDLNLLLVGA (2898 aa)) lie on the Extracellular side of the membrane. 3 N-linked (GlcNAc...) asparagine glycosylation sites follow: Asn-217, Asn-256, and Asn-402. Residue Asn-584 is glycosylated (N-linked (GlcNAc...) asparagine). The N-linked (GlcNAc...) asparagine glycan is linked to Asn-1249. The N-linked (GlcNAc...) asparagine glycan is linked to Asn-1521. Residue Asn-1718 is glycosylated (N-linked (GlcNAc...) asparagine). N-linked (GlcNAc...) asparagine glycosylation occurs at Asn-1996. Positions 2065 to 2094 (GPRFPRASSEATIRENAPPGTPIVSPRAVH) are disordered. Residues Asn-2361, Asn-2428, and Asn-2569 are each glycosylated (N-linked (GlcNAc...) asparagine). Residues Asn-2761, Asn-2792, and Asn-2862 are each glycosylated (N-linked (GlcNAc...) asparagine). A helical transmembrane segment spans residues 2941-2961 (VAASLGVVVVLALAALVLGLV). Residues 2962–3298 (RARSRKAEAA…EPPDDTELHI (337 aa)) lie on the Cytoplasmic side of the membrane. Residues 2986 to 3040 (LQKLGREPPSPPPSEHLYHQTLPSYGGPGAGGPYPRGGSLDPSHSSGRGSAEAAE) are disordered. Residues 3011–3020 (GGPGAGGPYP) are compositionally biased toward gly residues. Ser-3055 bears the Phosphoserine mark. Disordered regions lie at residues 3062–3082 (ARGPDSGIQQDADGLSDTSCE) and 3233–3298 (ASHR…ELHI). 2 stretches are compositionally biased toward low complexity: residues 3244–3266 (SLSSAAMSPSFSPSLSPLAARSP) and 3276–3289 (GPSASALSAESGLE).

As to quaternary structure, heterophilic interaction with FAT4; this interaction affects their respective protein levels. Expressed in fibroblasts but not in melanocytes or keratinocytes.

It localises to the cell membrane. Its function is as follows. Calcium-dependent cell-adhesion protein. Mediates functions in neuroprogenitor cell proliferation and differentiation. In the heart, has a critical role for proper morphogenesis of the mitral valve, acting in the regulation of cell migration involved in valve formation. This chain is Protocadherin-16 (DCHS1), found in Homo sapiens (Human).